A 364-amino-acid chain; its full sequence is sn-glycerol-3-phosphate import ATP-binding protein UgpC (364 aa).

The 232-residue stretch at 4–235 (VVLRNVRKTY…PATTFVASFI (232 aa)) folds into the ABC transporter domain. ATP is bound at residue 37 to 44 (GPSGCGKS).

Belongs to the ABC transporter superfamily. sn-glycerol-3-phosphate importer (TC 3.A.1.1.3) family. The complex is composed of two ATP-binding proteins (UgpC), two transmembrane proteins (UgpA and UgpE) and a solute-binding protein (UgpB).

The protein localises to the cell inner membrane. It carries out the reaction sn-glycerol 3-phosphate(out) + ATP + H2O = sn-glycerol 3-phosphate(in) + ADP + phosphate + H(+). In terms of biological role, part of the ABC transporter complex UgpBAEC involved in sn-glycerol-3-phosphate (G3P) import. Responsible for energy coupling to the transport system. The protein is sn-glycerol-3-phosphate import ATP-binding protein UgpC of Rhodopseudomonas palustris (strain HaA2).